A 2172-amino-acid polypeptide reads, in one-letter code: DExH-box ATP-dependent RNA helicase DExH13 (2172 aa).

A disordered region spans residues 20-83; the sequence is YKVNSSLVLN…KSKKKKERCD (64 aa). Residues 30-73 are compositionally biased toward basic and acidic residues; sequence SDERRRDTHESSGEPESLRGRIDPKSFGDRVVRGRPHELDERLN. Residues 515 to 698 enclose the Helicase ATP-binding 1 domain; sequence GTALFKADNI…FLRVDLKNGL (184 aa). 528 to 535 is an ATP binding site; sequence APTGAGKT. The DEIH box signature appears at 640 to 643; the sequence is DEIH. In terms of domain architecture, Helicase C-terminal 1 spans 742–946; the sequence is GKHQVLIFVH…NAREACHWLG (205 aa). In terms of domain architecture, SEC63 1 spans 1007–1308; the sequence is TDLGRIASYY…KWLDSPTVLP (302 aa). A Helicase ATP-binding 2 domain is found at 1361–1538; the sequence is TVLYNTSDNV…WIGASSCGVF (178 aa). Position 1374-1381 (1374-1381) interacts with ATP; it reads APTGSGKT. Positions 1480–1483 match the DELH box motif; it reads DELH. A Helicase C-terminal 2 domain is found at 1575 to 1772; it reads AIVQHAKNKK…NFNAEVVARV (198 aa). One can recognise an SEC63 2 domain in the interval 1840–2157; the sequence is PLNLGMIASY…YLGCDQEYSF (318 aa).

The protein resides in the nucleus. The enzyme catalyses ATP + H2O = ADP + phosphate + H(+). RNA helicase that plays an essential role in pre-mRNA splicing as component of the U5 snRNP and U4/U6-U5 tri-snRNP complexes. Involved in spliceosome assembly, activation and disassembly. This is DExH-box ATP-dependent RNA helicase DExH13 from Arabidopsis thaliana (Mouse-ear cress).